The sequence spans 194 residues: Peptidyl-tRNA hydrolase (194 aa).

Tyrosine 17 provides a ligand contact to tRNA. Histidine 22 (proton acceptor) is an active-site residue. Positions 68, 70, and 116 each coordinate tRNA.

Belongs to the PTH family. As to quaternary structure, monomer.

The protein resides in the cytoplasm. The catalysed reaction is an N-acyl-L-alpha-aminoacyl-tRNA + H2O = an N-acyl-L-amino acid + a tRNA + H(+). Functionally, hydrolyzes ribosome-free peptidyl-tRNAs (with 1 or more amino acids incorporated), which drop off the ribosome during protein synthesis, or as a result of ribosome stalling. Its function is as follows. Catalyzes the release of premature peptidyl moieties from peptidyl-tRNA molecules trapped in stalled 50S ribosomal subunits, and thus maintains levels of free tRNAs and 50S ribosomes. This Haemophilus influenzae (strain 86-028NP) protein is Peptidyl-tRNA hydrolase.